A 224-amino-acid chain; its full sequence is Ribose-5-phosphate isomerase A (224 aa).

Substrate is bound by residues 26 to 29, 81 to 84, and 94 to 97; these read TGST, DGAD, and KGGG. The Proton acceptor role is filled by E103. Residue K121 coordinates substrate.

It belongs to the ribose 5-phosphate isomerase family. As to quaternary structure, homodimer.

It catalyses the reaction aldehydo-D-ribose 5-phosphate = D-ribulose 5-phosphate. It functions in the pathway carbohydrate degradation; pentose phosphate pathway; D-ribose 5-phosphate from D-ribulose 5-phosphate (non-oxidative stage): step 1/1. Functionally, catalyzes the reversible conversion of ribose-5-phosphate to ribulose 5-phosphate. The polypeptide is Ribose-5-phosphate isomerase A (Listeria innocua serovar 6a (strain ATCC BAA-680 / CLIP 11262)).